The primary structure comprises 328 residues: L-lactate dehydrogenase (328 aa).

NAD(+) contacts are provided by residues Val18, Glu39, Lys46, Tyr71, and 85 to 86 (GA). 2 residues coordinate substrate: Gln88 and Arg94. NAD(+) is bound by residues Ser107, 124-126 (AAN), and Ser149. 126–129 (NPVD) contributes to the substrate binding site. Position 154–157 (154–157 (DSAR)) interacts with substrate. Residues Arg159 and His174 each coordinate beta-D-fructose 1,6-bisphosphate. His181 serves as the catalytic Proton acceptor. Phosphotyrosine is present on Tyr226. Thr235 contributes to the substrate binding site.

It belongs to the LDH/MDH superfamily. LDH family. As to quaternary structure, homotetramer.

The protein resides in the cytoplasm. It carries out the reaction (S)-lactate + NAD(+) = pyruvate + NADH + H(+). It functions in the pathway fermentation; pyruvate fermentation to lactate; (S)-lactate from pyruvate: step 1/1. With respect to regulation, allosterically activated by fructose 1,6-bisphosphate (FBP). Its function is as follows. Catalyzes the conversion of lactate to pyruvate. In Streptococcus thermophilus (strain ATCC BAA-250 / LMG 18311), this protein is L-lactate dehydrogenase.